The chain runs to 439 residues: Ornithine aminotransferase, mitochondrial (439 aa).

The N-terminal 25 residues, 1–25 (MFSKLAHLQRFAVLSRGVHSSVASA), are a transit peptide targeting the mitochondrion; in hepatic form. Residues 1–35 (MFSKLAHLQRFAVLSRGVHSSVASATSVATKKTVQ) constitute a mitochondrion; in renal form transit peptide. N6-acetyllysine is present on residues Lys49 and Lys66. Lys102 bears the N6-succinyllysine mark. At Lys107 the chain carries N6-acetyllysine; alternate. At Lys107 the chain carries N6-succinyllysine; alternate. Lys292 carries the N6-(pyridoxal phosphate)lysine modification. Position 362 is an N6-acetyllysine; alternate (Lys362). Lys362 carries the N6-succinyllysine; alternate modification. N6-acetyllysine is present on residues Lys386 and Lys392. An N6-acetyllysine; alternate modification is found at Lys405. An N6-succinyllysine; alternate modification is found at Lys405. Residue Lys421 is modified to N6-acetyllysine.

This sequence belongs to the class-III pyridoxal-phosphate-dependent aminotransferase family. In terms of assembly, homohexamer. Pyridoxal 5'-phosphate is required as a cofactor.

The protein localises to the mitochondrion matrix. The enzyme catalyses L-ornithine + 2-oxoglutarate = L-glutamate 5-semialdehyde + L-glutamate. It participates in amino-acid biosynthesis; L-proline biosynthesis; L-glutamate 5-semialdehyde from L-ornithine: step 1/1. In terms of biological role, catalyzes the reversible interconversion of L-ornithine and 2-oxoglutarate to L-glutamate semialdehyde and L-glutamate. This Homo sapiens (Human) protein is Ornithine aminotransferase, mitochondrial (OAT).